The primary structure comprises 260 residues: MSHGWGYADHNGPQKWCENFPIANGPRQSPIDIQTKGASYDDTLKPLKLKYDPTTSLDILNNGHSFQVTFADDNDSSMLTEGPISGKYRLKQFHFHWGASDGKGSEHTVDGKCYPAELHLVHWNTKYASFGEAANKPDGLAVVGVFLQIGEDNPKLQKILDAMDAIKSKGKQTSFTNFDPTCLLPKSLEYWTYPGSLTTPPLYESVTWIVCKQPISVSSEQMKKFRSLLFTAEEEKACCMVNNYRPPQPLKDRKVCASFK.

One can recognise an Alpha-carbonic anhydrase domain in the interval 3 to 259 (HGWGYADHNG…LKDRKVCASF (257 aa)). H64 acts as the Proton donor/acceptor in catalysis. H94, H96, and H119 together coordinate Zn(2+). A substrate-binding site is contributed by 198–199 (TT).

Belongs to the alpha-carbonic anhydrase family. Zn(2+) serves as cofactor.

It is found in the cytoplasm. It carries out the reaction hydrogencarbonate + H(+) = CO2 + H2O. Functionally, catalyzes the reversible hydration of carbon dioxide. The sequence is that of Carbonic anhydrase 2 (ca2) from Pseudaspius hakonensis (Big-scaled redfin).